The following is a 285-amino-acid chain: DegV domain-containing protein CA_C3284 (285 aa).

The DegV domain occupies 3–280 (VKILTDSTSC…PGAIGIAYYT (278 aa)). Residues serine 59 and serine 91 each contribute to the hexadecanoate site.

In terms of biological role, may bind long-chain fatty acids, such as palmitate, and may play a role in lipid transport or fatty acid metabolism. The sequence is that of DegV domain-containing protein CA_C3284 from Clostridium acetobutylicum (strain ATCC 824 / DSM 792 / JCM 1419 / IAM 19013 / LMG 5710 / NBRC 13948 / NRRL B-527 / VKM B-1787 / 2291 / W).